Reading from the N-terminus, the 319-residue chain is ATP-dependent 6-phosphofructokinase (319 aa).

ATP contacts are provided by residues G11, 72–73 (RS), and 102–105 (GDGS). D103 is a binding site for Mg(2+). A substrate-binding site is contributed by 126–128 (TID). The active-site Proton acceptor is D128. Position 155 (R155) interacts with ADP. Substrate is bound by residues R163 and 170-172 (MGR). 186-188 (GAE) serves as a coordination point for ADP. Substrate is bound by residues E223, R245, and 251 to 254 (HTQR).

It belongs to the phosphofructokinase type A (PFKA) family. ATP-dependent PFK group I subfamily. Prokaryotic clade 'B1' sub-subfamily. Homotetramer. The cofactor is Mg(2+).

It is found in the cytoplasm. It carries out the reaction beta-D-fructose 6-phosphate + ATP = beta-D-fructose 1,6-bisphosphate + ADP + H(+). The protein operates within carbohydrate degradation; glycolysis; D-glyceraldehyde 3-phosphate and glycerone phosphate from D-glucose: step 3/4. Allosterically activated by ADP and other diphosphonucleosides, and allosterically inhibited by phosphoenolpyruvate. In terms of biological role, catalyzes the phosphorylation of D-fructose 6-phosphate to fructose 1,6-bisphosphate by ATP, the first committing step of glycolysis. The sequence is that of ATP-dependent 6-phosphofructokinase from Sulfurimonas denitrificans (strain ATCC 33889 / DSM 1251) (Thiomicrospira denitrificans (strain ATCC 33889 / DSM 1251)).